Here is a 3508-residue protein sequence, read N- to C-terminus: WD repeat and FYVE domain-containing protein 3 (3508 aa).

Phosphoserine occurs at positions 1942 and 2277. Disordered stretches follow at residues 2279 to 2303 (FGLS…SPSP) and 2441 to 2504 (SSEG…EKTD). The sufficient for translocalization to p62 bodies/ALIS stretch occupies residues 2284–2963 (LTGSRRNRKE…PHPPKRVRSR (680 aa)). The span at 2450–2459 (EPEHGEDTIA) shows a compositional bias: basic and acidic residues. Residue serine 2474 is modified to Phosphoserine. The BEACH-type PH domain maps to 2513 to 2638 (EEGEKIQHMY…IRNKVYQRFL (126 aa)). Positions 2568-3508 (MHEPIIPRGA…RGAEDGPRNC (941 aa)) are interaction with SQSTM1. The region spanning 2665-2958 (GLLSTLVGEK…QLFKKPHPPK (294 aa)) is the BEACH domain. The segment at 2963 to 3508 (RLNGDNIGIS…RGAEDGPRNC (546 aa)) is interaction with ATG5. WD repeat units lie at residues 3059 to 3097 (SEWG…EKAK), 3107 to 3146 (GHTD…FLTQ), 3149 to 3188 (GHRA…VSVN), and 3192 to 3236 (GRSQ…VPET). Residues 3254-3317 (AQIGQQAQDD…SGSDDSRRWS (64 aa)) are disordered. Acidic residues predominate over residues 3261-3272 (QDDDSSDSETEE). Phosphoserine occurs at positions 3317 and 3321. The short motif at 3326-3331 (DGFIFV) is the LIR element. Residues 3390-3429 (THPAEVTALGVSKDHSRILVGDSRGRVFSWSVSDQPGRSA) form a WD 5 repeat. The segment at 3436-3496 (DEGGDSCSGC…VCQNCYYSLQ (61 aa)) adopts an FYVE-type zinc-finger fold. Zn(2+) contacts are provided by cysteine 3442, cysteine 3445, cysteine 3458, cysteine 3461, cysteine 3466, cysteine 3469, cysteine 3488, and cysteine 3491.

In terms of assembly, directly interacts with ATG5 and associates with the ATG12-ATG5-ATG16L complex. Interacts with p62/SQSTM1. Directly interacts with GABARAP, GABARAPL1 and GABARAPL2; the interaction with GABARAP is required for WDFY3 recruitment to MAP1LC3B-positive p62/SQSTM1 bodies. Weakly interacts with MAP1LC3C; this interaction is direct. Does not interact with MAP1LC3A, nor MAP1LC3B. Interacts with TRAF6. Widely expressed, with high levels in the brain (at protein level). In the brain, expressed by both neuronal and non-neuronal cells. Expressed in bones, in the periosteum, cartilage, growth plate, trabeculae of the primary spongiosa, and scattered hematopoietic cells within the medullary cavity. Tends to be expressed at lower levels in the hypertrophic zone compared to trabeculae. Expressed in osteoblasts, osteoclasts and bone-marrow derived macrophages.

Its subcellular location is the nucleus. The protein resides in the cytoplasm. It localises to the cytosol. The protein localises to the PML body. It is found in the membrane. Its subcellular location is the perikaryon. The protein resides in the cell projection. It localises to the axon. Functionally, required for selective macroautophagy (aggrephagy). Acts as an adapter protein by linking specific proteins destined for degradation to the core autophagic machinery members, such as the ATG5-ATG12-ATG16L E3-like ligase, SQSTM1 and LC3. Involved in the formation and autophagic degradation of cytoplasmic ubiquitin-containing inclusions (p62 bodies, ALIS/aggresome-like induced structures). Important for normal brain development. Essential for the formation of axonal tracts throughout the brain and spinal cord, including the formation of the major forebrain commissures. Involved in the ability of neural cells to respond to guidance cues. Required for cortical neurons to respond to the trophic effects of netrin-1/NTN1. Regulates Wnt signaling through the removal of DVL3 aggregates, likely in an autophagy-dependent manner. This process may be important for the determination of brain size during embryonic development. May regulate osteoclastogenesis by acting on the TNFSF11/RANKL - TRAF6 pathway. After cytokinetic abscission, involved in midbody remnant degradation. In vitro strongly binds to phosphatidylinositol 3-phosphate (PtdIns3P). This Mus musculus (Mouse) protein is WD repeat and FYVE domain-containing protein 3 (Wdfy3).